The chain runs to 486 residues: UDP-N-acetylmuramate--L-alanine ligase (486 aa).

129–135 (GTHGKTT) contributes to the ATP binding site.

Belongs to the MurCDEF family.

Its subcellular location is the cytoplasm. The enzyme catalyses UDP-N-acetyl-alpha-D-muramate + L-alanine + ATP = UDP-N-acetyl-alpha-D-muramoyl-L-alanine + ADP + phosphate + H(+). It participates in cell wall biogenesis; peptidoglycan biosynthesis. Cell wall formation. The sequence is that of UDP-N-acetylmuramate--L-alanine ligase from Vibrio vulnificus (strain YJ016).